We begin with the raw amino-acid sequence, 1091 residues long: ATP-dependent helicase/deoxyribonuclease subunit B (1091 aa).

The protein belongs to the helicase family. AddB/RexB type 2 subfamily. In terms of assembly, heterodimer of AddA and RexB. The cofactor is Mg(2+).

Functionally, the heterodimer acts as both an ATP-dependent DNA helicase and an ATP-dependent, dual-direction single-stranded exonuclease. Recognizes the chi site generating a DNA molecule suitable for the initiation of homologous recombination. This subunit has 5' -&gt; 3' nuclease activity but not helicase activity. The polypeptide is ATP-dependent helicase/deoxyribonuclease subunit B (Streptococcus pneumoniae (strain ATCC 700669 / Spain 23F-1)).